A 450-amino-acid chain; its full sequence is TATA box-binding protein-associated factor RNA polymerase I subunit A (450 aa).

As to quaternary structure, component of the transcription factor SL1/TIF-IB complex, composed of TBP and at least TAF1A, TAF1B, TAF1C and TAF1D. In the complex interacts directly with TBP, TAF1A and TAF1B. Interaction of the SL1/TIF-IB subunits with TBP excludes interaction of TBP with the transcription factor IID (TFIID) subunits. Interacts with UBFT. Interacts with CEBPA (isoform 1 and isoform 4). Part of Pol I pre-initiation complex (PIC), in which Pol I core assembles with RRN3 and promoter-bound UTBF and SL1/TIF-IB complex.

It localises to the nucleus. The protein resides in the nucleolus. Its function is as follows. Component of the transcription factor SL1/TIF-IB complex, which is involved in the assembly of the PIC (pre-initiation complex) during RNA polymerase I-dependent transcription. The rate of PIC formation probably is primarily dependent on the rate of association of SL1/TIF-IB with the rDNA promoter. SL1/TIF-IB is involved in stabilization of nucleolar transcription factor 1/UBTF on rDNA. Formation of SL1/TIF-IB excludes the association of TBP with TFIID subunits. In Homo sapiens (Human), this protein is TATA box-binding protein-associated factor RNA polymerase I subunit A (TAF1A).